Here is a 224-residue protein sequence, read N- to C-terminus: tRNA (guanine-N(7)-)-methyltransferase (224 aa).

3 residues coordinate S-adenosyl-L-methionine: Glu57, Asp82, and Asp109. Residue Asp167 coordinates substrate.

It belongs to the class I-like SAM-binding methyltransferase superfamily. TrmB family.

It carries out the reaction guanosine(46) in tRNA + S-adenosyl-L-methionine = N(7)-methylguanosine(46) in tRNA + S-adenosyl-L-homocysteine. The protein operates within tRNA modification; N(7)-methylguanine-tRNA biosynthesis. In terms of biological role, catalyzes the formation of N(7)-methylguanine at position 46 (m7G46) in tRNA. In Chloroflexus aggregans (strain MD-66 / DSM 9485), this protein is tRNA (guanine-N(7)-)-methyltransferase.